We begin with the raw amino-acid sequence, 311 residues long: Ciliary microtubule inner protein 2B (311 aa).

Disordered stretches follow at residues 64–93 (PFPP…LGDP) and 150–183 (QEGR…APFM).

Belongs to the CIMIP2 family. As to expression, expressed in airway epithelial cells.

It is found in the cytoplasm. The protein localises to the cytoskeleton. The protein resides in the cilium axoneme. Its function is as follows. Microtubule inner protein (MIP) part of the dynein-decorated doublet microtubules (DMTs) in cilia axoneme, which is required for motile cilia beating. This Xenopus laevis (African clawed frog) protein is Ciliary microtubule inner protein 2B (cimip2b).